Here is a 150-residue protein sequence, read N- to C-terminus: MGRGRVEMKRIENKINRQVTFSKRRAGLLKKAHEISILCDAEVSLIVFSHKGKLFEYSSESCMEKVLERYERYSYAEKQLKAPDSHVNAQTNWSMEYSRLKAKIELWERNQRHYLGEDLESISIKELQNLEQQLDTSLKHIRSRKNQLMH.

Positions methionine 1 to serine 61 constitute an MADS-box domain. Residues glutamine 90–histidine 150 enclose the K-box; partial domain.

In terms of assembly, homodimer capable of binding to CArG-box sequences. In terms of tissue distribution, expressed in some of the meristems of arrest-stage cauliflower heads.

It localises to the nucleus. Functionally, probable transcription factor that promotes early floral meristem identity in synergy with APETALA1, FRUITFULL and LEAFY. Is required subsequently for the transition of an inflorescence meristem into a floral meristem. Seems to be partially redundant to the function of APETALA1. The sequence is that of Truncated transcription factor CAULIFLOWER A (CAL-A) from Brassica oleracea var. botrytis (Cauliflower).